The primary structure comprises 789 residues: Larval serum protein 1 beta chain (789 aa).

An N-terminal signal peptide occupies residues 1–16; the sequence is MKIAIALLACLGLAAA.

This sequence belongs to the hemocyanin family. As to quaternary structure, heterohexamer, composed of three subunits, alpha, beta and gamma. In terms of tissue distribution, larval hemolymph.

The protein resides in the secreted. The protein localises to the extracellular space. Larval storage protein (LSP) which may serve as a store of amino acids for synthesis of adult proteins. The protein is Larval serum protein 1 beta chain (Lsp1beta) of Drosophila melanogaster (Fruit fly).